We begin with the raw amino-acid sequence, 146 residues long: Universal stress protein MT1672 (146 aa).

The protein belongs to the universal stress protein A family.

The protein is Universal stress protein MT1672 of Mycobacterium tuberculosis (strain CDC 1551 / Oshkosh).